A 132-amino-acid chain; its full sequence is Succinate dehydrogenase cytochrome b560 subunit (132 aa).

The next 2 helical transmembrane spans lie at 32-49 and 59-81; these read LYLV…KFLF and KFVK…FSMY. His-86 is a heme binding site. Residues 107-127 form a helical membrane-spanning segment; the sequence is VTMSTKLSLSLSLVLVLINCL.

The protein belongs to the cytochrome b560 family. In terms of assembly, forms part of complex II containing four subunits: a 70 kDa flavoprotein (FP), a 27 kDa iron-sulfur protein (IP), a cytochrome B and a membrane-anchoring protein. The cofactor is heme.

Its subcellular location is the mitochondrion inner membrane. Its pathway is carbohydrate metabolism; tricarboxylic acid cycle. Membrane-anchoring subunit of succinate dehydrogenase (SDH) that is involved in complex II of the mitochondrial electron transport chain and is responsible for transferring electrons from succinate to ubiquinone (coenzyme Q). The sequence is that of Succinate dehydrogenase cytochrome b560 subunit (SDH3) from Cyanidium caldarium (Red alga).